Consider the following 239-residue polypeptide: DNA damage-regulated autophagy modulator protein 1 (239 aa).

6 consecutive transmembrane segments (helical) span residues 15–35, 54–74, 91–111, 119–139, 162–182, and 201–221; these read ILVIWSSAGFLFSYIISVLIG, SGVFGFMISVSAMLGAATMYT, IYFNKISLAIGLFGCIGMGIV, VPAVHDAGALITFICGVMYIL, MTVSLIAFIAVVPMSVFSILS, and TSAICEWTVAFGFNMYFLTFI.

The protein belongs to the DRAM/TMEM150 family.

It is found in the lysosome membrane. Lysosomal modulator of autophagy that plays a central role in p53/TP53-mediated apoptosis. The sequence is that of DNA damage-regulated autophagy modulator protein 1 (dram1) from Xenopus laevis (African clawed frog).